Reading from the N-terminus, the 361-residue chain is Phospho-N-acetylmuramoyl-pentapeptide-transferase (361 aa).

The next 10 membrane-spanning stretches (helical) occupy residues 21 to 41, 72 to 92, 94 to 114, 135 to 155, 169 to 189, 200 to 220, 240 to 260, 263 to 283, 289 to 309, and 338 to 358; these read YITF…FVIG, TPTM…LLWV, LANV…LIGF, LAWT…VTPH, LLVN…VGAS, GLAI…AYLS, LAVF…FNAP, MVFM…AVSV, LVLA…MVQV, and TVVI…LSTL.

This sequence belongs to the glycosyltransferase 4 family. MraY subfamily. It depends on Mg(2+) as a cofactor.

It is found in the cell inner membrane. The enzyme catalyses UDP-N-acetyl-alpha-D-muramoyl-L-alanyl-gamma-D-glutamyl-meso-2,6-diaminopimeloyl-D-alanyl-D-alanine + di-trans,octa-cis-undecaprenyl phosphate = di-trans,octa-cis-undecaprenyl diphospho-N-acetyl-alpha-D-muramoyl-L-alanyl-D-glutamyl-meso-2,6-diaminopimeloyl-D-alanyl-D-alanine + UMP. Its pathway is cell wall biogenesis; peptidoglycan biosynthesis. Catalyzes the initial step of the lipid cycle reactions in the biosynthesis of the cell wall peptidoglycan: transfers peptidoglycan precursor phospho-MurNAc-pentapeptide from UDP-MurNAc-pentapeptide onto the lipid carrier undecaprenyl phosphate, yielding undecaprenyl-pyrophosphoryl-MurNAc-pentapeptide, known as lipid I. The chain is Phospho-N-acetylmuramoyl-pentapeptide-transferase from Rhodospirillum centenum (strain ATCC 51521 / SW).